Reading from the N-terminus, the 233-residue chain is Probable fimbrial chaperone protein ElfD (233 aa).

Positions 1–26 (MKTCITKGIVTVSLTAILLSCSSTWA) are cleaved as a signal peptide.

Belongs to the periplasmic pilus chaperone family.

It localises to the periplasm. Its function is as follows. Part of the elfADCG fimbrial operon, which could be required for adherence to host epithelial cells. Could be required for the biogenesis of the ElfA fimbriae. In Escherichia coli O157:H7, this protein is Probable fimbrial chaperone protein ElfD (elfD).